The following is a 180-amino-acid chain: Dual-action ribosomal maturation protein DarP (180 aa).

Residues 1–13 (MKPDKTENTEHGI) show a composition bias toward basic and acidic residues. The disordered stretch occupies residues 1-21 (MKPDKTENTEHGIEPVSKTKR).

The protein belongs to the DarP family.

It is found in the cytoplasm. Its function is as follows. Member of a network of 50S ribosomal subunit biogenesis factors which assembles along the 30S-50S interface, preventing incorrect 23S rRNA structures from forming. Promotes peptidyl transferase center (PTC) maturation. The chain is Dual-action ribosomal maturation protein DarP from Methylobacillus flagellatus (strain ATCC 51484 / DSM 6875 / VKM B-1610 / KT).